The following is a 445-amino-acid chain: Exodeoxyribonuclease 7 large subunit (445 aa).

Belongs to the XseA family. As to quaternary structure, heterooligomer composed of large and small subunits.

The protein resides in the cytoplasm. It carries out the reaction Exonucleolytic cleavage in either 5'- to 3'- or 3'- to 5'-direction to yield nucleoside 5'-phosphates.. In terms of biological role, bidirectionally degrades single-stranded DNA into large acid-insoluble oligonucleotides, which are then degraded further into small acid-soluble oligonucleotides. The polypeptide is Exodeoxyribonuclease 7 large subunit (Xanthomonas euvesicatoria pv. vesicatoria (strain 85-10) (Xanthomonas campestris pv. vesicatoria)).